We begin with the raw amino-acid sequence, 538 residues long: Pentachlorophenol 4-monooxygenase (538 aa).

FAD contacts are provided by residues 16–45 (AVLI…MIDR) and 288–298 (YRKGNVFLAGD).

It belongs to the PheA/TfdB FAD monooxygenase family. Homodimer. It depends on FAD as a cofactor.

It carries out the reaction pentachlorophenol + NADPH + O2 + H(+) = 2,3,5,6-tetrachloro-1,4-benzoquinone + chloride + NADP(+) + H2O. The catalysed reaction is 2,3,5,6-tetrachlorophenol + NADPH + O2 = 2,3,5,6-tetrachlorohydroquinone + NADP(+) + H2O. It functions in the pathway xenobiotic degradation; pentachlorophenol degradation. Functionally, dechlorination of pentachlorophenol to tetrachlorobenzoquinone. Also removes hydrogen and nitro, amino, and cyano groups from benzene ring at the para position in relation to the hydroxyl of phenol. This chain is Pentachlorophenol 4-monooxygenase (pcpB), found in Sphingobium chlorophenolicum.